A 354-amino-acid chain; its full sequence is MNGTEGPYFYVPMVNTTGIVRSPYEYPQYYLVSPAAYACLGAYMFFLILVGFPVNFLTLYVTIEHKKLRTPLNYILLNLAVADLFMVFGGFTTTIYTSMHGYFVLGRLGCNLEGYFATLGGEIGLWSLVVLAVERWLVVCKPISNFRFTENHAIMGLVFTWIMANACAAPPLLGWSRYIPEGMQCSCGVDYYTRAEGFNNESFVIYMFICHFCIPLVVVFFCYGRLLCAVKEAAAAQQESETTQRAEREVTRMVVILVIGFLVCWTPYASVAWYIFSNQGSEFGPLFMTIPAFFAKSSSIYNPMIYICMNKQFRHCMITTLCCGKNPFEEEEGASTTASKTEASSVSSSSVSPA.

The Extracellular portion of the chain corresponds to methionine 1–alanine 36. Residues asparagine 2 and asparagine 15 are each glycosylated (N-linked (GlcNAc...) asparagine). A helical transmembrane segment spans residues tyrosine 37–valine 61. Residues threonine 62–asparagine 73 are Cytoplasmic-facing. Residues tyrosine 74–tyrosine 96 traverse the membrane as a helical segment. The Extracellular segment spans residues threonine 97 to cysteine 110. Cysteine 110 and cysteine 187 are disulfide-bonded. A helical transmembrane segment spans residues asparagine 111–valine 133. The 'Ionic lock' involved in activated form stabilization signature appears at glutamate 134–tryptophan 136. Residues glutamate 134–histidine 152 are Cytoplasmic-facing. Residues alanine 153–leucine 173 traverse the membrane as a helical segment. Residues glycine 174 to serine 202 are Extracellular-facing. A helical transmembrane segment spans residues phenylalanine 203–glycine 224. Topologically, residues arginine 225–arginine 252 are cytoplasmic. The helical transmembrane segment at methionine 253–tyrosine 274 threads the bilayer. Residues isoleucine 275 to leucine 286 are Extracellular-facing. Residues phenylalanine 287–cysteine 308 form a helical membrane-spanning segment. Lysine 296 carries the post-translational modification N6-(retinylidene)lysine. The Cytoplasmic segment spans residues methionine 309–alanine 354. Residues cysteine 322 and cysteine 323 are each lipidated (S-palmitoyl cysteine). The disordered stretch occupies residues glycine 333–alanine 354. The span at alanine 334–alanine 354 shows a compositional bias: low complexity.

This sequence belongs to the G-protein coupled receptor 1 family. Opsin subfamily. Post-translationally, phosphorylated on some or all of the serine and threonine residues present in the C-terminal region. In terms of processing, contains one covalently linked retinal chromophore.

The protein resides in the membrane. Its subcellular location is the cell projection. It is found in the cilium. The protein localises to the photoreceptor outer segment. Photoreceptor required for image-forming vision at low light intensity. While most salt water fish species use retinal as chromophore, most freshwater fish use 3-dehydroretinal, or a mixture of retinal and 3-dehydroretinal. Light-induced isomerization of 11-cis to all-trans retinal triggers a conformational change that activates signaling via G-proteins. Subsequent receptor phosphorylation mediates displacement of the bound G-protein alpha subunit by arrestin and terminates signaling. This is Rhodopsin (rho) from Gambusia affinis (Western mosquitofish).